A 268-amino-acid polypeptide reads, in one-letter code: 1D-myo-inositol 2-acetamido-2-deoxy-alpha-D-glucopyranoside deacetylase (268 aa).

3 residues coordinate Zn(2+): H7, D10, and H142.

It belongs to the MshB deacetylase family. Zn(2+) is required as a cofactor.

The catalysed reaction is 1D-myo-inositol 2-acetamido-2-deoxy-alpha-D-glucopyranoside + H2O = 1D-myo-inositol 2-amino-2-deoxy-alpha-D-glucopyranoside + acetate. Functionally, catalyzes the deacetylation of 1D-myo-inositol 2-acetamido-2-deoxy-alpha-D-glucopyranoside (GlcNAc-Ins) in the mycothiol biosynthesis pathway. The sequence is that of 1D-myo-inositol 2-acetamido-2-deoxy-alpha-D-glucopyranoside deacetylase from Saccharomonospora viridis (strain ATCC 15386 / DSM 43017 / JCM 3036 / CCUG 5913 / NBRC 12207 / NCIMB 9602 / P101) (Thermoactinomyces viridis).